The chain runs to 348 residues: NADH-ubiquinone oxidoreductase chain 2 (348 aa).

Helical transmembrane passes span 1-21 (MMTL…MFSS), 23-43 (WFFA…MMLF), 56-76 (YFIS…WNYF), 92-112 (ITLI…HFWL), 123-143 (MGLI…IQVS), 148-168 (NMYI…FGGL), 176-196 (LLAY…AVSA), 198-218 (LSWV…TILI), 242-262 (CILV…FLKL), 272-292 (SLIL…FFYL), and 321-341 (LLFN…PFMI).

Belongs to the complex I subunit 2 family.

It localises to the mitochondrion inner membrane. It carries out the reaction a ubiquinone + NADH + 5 H(+)(in) = a ubiquinol + NAD(+) + 4 H(+)(out). Its function is as follows. Core subunit of the mitochondrial membrane respiratory chain NADH dehydrogenase (Complex I) that is believed to belong to the minimal assembly required for catalysis. Complex I functions in the transfer of electrons from NADH to the respiratory chain. The immediate electron acceptor for the enzyme is believed to be ubiquinone. The sequence is that of NADH-ubiquinone oxidoreductase chain 2 (MT-ND2) from Myxine glutinosa (Atlantic hagfish).